Consider the following 387-residue polypeptide: Phosphoglycerate kinase (387 aa).

Residues 21–23, R36, 59–62, R113, and R146 each bind substrate; these read DLN and HLGR. ATP is bound by residues K197, E314, and 340-343; that span reads GGDT.

Belongs to the phosphoglycerate kinase family. Monomer.

Its subcellular location is the cytoplasm. It catalyses the reaction (2R)-3-phosphoglycerate + ATP = (2R)-3-phospho-glyceroyl phosphate + ADP. It participates in carbohydrate degradation; glycolysis; pyruvate from D-glyceraldehyde 3-phosphate: step 2/5. The polypeptide is Phosphoglycerate kinase (Sodalis glossinidius (strain morsitans)).